Here is a 93-residue protein sequence, read N- to C-terminus: Small ribosomal subunit protein uS19 (93 aa).

It belongs to the universal ribosomal protein uS19 family.

Functionally, protein S19 forms a complex with S13 that binds strongly to the 16S ribosomal RNA. This is Small ribosomal subunit protein uS19 from Mycolicibacterium paratuberculosis (strain ATCC BAA-968 / K-10) (Mycobacterium paratuberculosis).